Here is a 93-residue protein sequence, read N- to C-terminus: UPF0358 protein LMHCC_1561 (93 aa).

The protein belongs to the UPF0358 family.

In Listeria monocytogenes serotype 4a (strain HCC23), this protein is UPF0358 protein LMHCC_1561.